The primary structure comprises 116 residues: HTH-type transcriptional regulator SarV (116 aa).

The segment at residues 51–74 (RDTLHFEMLWDTSKIDVIIRKIYK) is a DNA-binding region (H-T-H motif).

It belongs to the SarA family.

The protein localises to the cytoplasm. In terms of biological role, part of the pathway by which MgrA and SarA control autolysis. The sequence is that of HTH-type transcriptional regulator SarV (sarV) from Staphylococcus aureus (strain Mu50 / ATCC 700699).